Consider the following 134-residue polypeptide: Protein NrdI (134 aa).

Belongs to the NrdI family.

Functionally, probably involved in ribonucleotide reductase function. The sequence is that of Protein NrdI from Chromohalobacter salexigens (strain ATCC BAA-138 / DSM 3043 / CIP 106854 / NCIMB 13768 / 1H11).